Reading from the N-terminus, the 38-residue chain is Cytochrome b6-f complex subunit 5 (38 aa).

A helical membrane pass occupies residues Leu5–Ala25.

It belongs to the PetG family. As to quaternary structure, the 4 large subunits of the cytochrome b6-f complex are cytochrome b6, subunit IV (17 kDa polypeptide, PetD), cytochrome f and the Rieske protein, while the 4 small subunits are PetG, PetL, PetM and PetN. The complex functions as a dimer.

The protein localises to the plastid. It is found in the chloroplast thylakoid membrane. Functionally, component of the cytochrome b6-f complex, which mediates electron transfer between photosystem II (PSII) and photosystem I (PSI), cyclic electron flow around PSI, and state transitions. PetG is required for either the stability or assembly of the cytochrome b6-f complex. The sequence is that of Cytochrome b6-f complex subunit 5 from Huperzia lucidula (Shining clubmoss).